Consider the following 487-residue polypeptide: MDKGLHFIFCVVTAVLLLRESSQTGAMRNDDAMIKPNDLRGPEENLPSLTVTTILEDPYVMVRSAELEGYCIDLLKALASMLHFSYKVKVVGDGKYGAISPSGNWTGMIGEILRQEADIAVAPLTVTSAREEVVSFTTPFLQTGIGILLRKETISQEMSFFHFLAPFSKETWTGLLFAYVLTCVCLFLVARLSPCEWNEPKNEENHFTFLNSLWFGAGALTLQGVTPRPKAFSVRVIAAIWWLFTIALLAAYIANFTALLSSGSEQLSIQTFEDLVKQRKLEFGTLDGSSTFYFFKNSKNPIHRMVYEYMDKRRDHVLVKTYQEAVQRVMESNYAFIGESISQDLAAARHCNLIRAPEVIGARGFGIATAQASPWTKKLSVAVLKLRETGDLDYLRNKWWESSCLHKSREGWSPLQPQALGGLFLTLAIGLALGVIAAMVELSNKSRHAAGHIKKSCCSIFTEEMCTRLRIKENTRQTQETSGRANA.

Residues 1–23 (MDKGLHFIFCVVTAVLLLRESSQ) form the signal peptide. Topologically, residues 24–169 (TGAMRNDDAM…FFHFLAPFSK (146 aa)) are extracellular. N104 is a glycosylation site (N-linked (GlcNAc...) asparagine). A helical transmembrane segment spans residues 170–190 (ETWTGLLFAYVLTCVCLFLVA). The Cytoplasmic portion of the chain corresponds to 191–235 (RLSPCEWNEPKNEENHFTFLNSLWFGAGALTLQGVTPRPKAFSVR). The chain crosses the membrane as a helical span at residues 236-256 (VIAAIWWLFTIALLAAYIANF). At 257–419 (TALLSSGSEQ…EGWSPLQPQA (163 aa)) the chain is on the extracellular side. Residues 420–440 (LGGLFLTLAIGLALGVIAAMV) traverse the membrane as a helical segment. Residues 441–487 (ELSNKSRHAAGHIKKSCCSIFTEEMCTRLRIKENTRQTQETSGRANA) lie on the Cytoplasmic side of the membrane.

This sequence belongs to the glutamate-gated ion channel (TC 1.A.10.1) family.

The protein localises to the cell membrane. It is found in the postsynaptic cell membrane. Receptor for glutamate. L-glutamate acts as an excitatory neurotransmitter at many synapses in the central nervous system. The postsynaptic actions of Glu are mediated by a variety of receptors that are named according to their selective agonists. The protein is Probable glutamate receptor (KBP) of Gallus gallus (Chicken).